A 508-amino-acid polypeptide reads, in one-letter code: Splicing regulatory glutamine/lysine-rich protein 1 (508 aa).

Residues 66–142 (RTVYVGNLNS…RPLKINHSNN (77 aa)) form the RRM domain. Phosphoserine is present on residues Ser171 and Ser184. The tract at residues 173–508 (ISAAIEPESG…ENLSTKTEAV (336 aa)) is disordered. Positions 180–189 (ESGKSNERKG) are enriched in basic and acidic residues. The span at 190–259 (GRSRSHTRSK…KSRSRSHSRD (70 aa)) shows a compositional bias: basic residues. Basic and acidic residues predominate over residues 260-355 (KRKDTREKIK…DRSKEIDEKR (96 aa)). Thr363 carries the post-translational modification Phosphothreonine. Positions 372–388 (RRSRSSSRERRRRRSRS) are enriched in basic residues. A compositionally biased stretch (basic and acidic residues) spans 419–488 (REKERDHISE…DAPRTEENKI (70 aa)). Residues 489–508 (QHNGNCQLNEENLSTKTEAV) show a composition bias toward polar residues. Residue Lys504 forms a Glycyl lysine isopeptide (Lys-Gly) (interchain with G-Cter in SUMO2) linkage.

This sequence belongs to the splicing factor SR family. As to quaternary structure, homodimer. Binds SFRS1, SFRS2, SFRS3 and SFRS6. Interacts with the spliceosome. Interacts with SREK1IP1.

The protein resides in the nucleus. Its function is as follows. Participates in the regulation of alternative splicing by modulating the activity of other splice facors. Inhibits the splicing activity of SFRS1, SFRS2 and SFRS6. Augments the splicing activity of SFRS3. This chain is Splicing regulatory glutamine/lysine-rich protein 1 (SREK1), found in Homo sapiens (Human).